The primary structure comprises 225 residues: MEFPFDVDALLPERITVLDQHLRPPARRPGTTTPARVDLQQQIMTIVDELGKASAKAQHLPAPITSASRMQSNRHVMYILKDTSARPAGKGAIVGFLKVGYKKLFVLDDREAHNEVEPLCILDFYIHESLQRHGHGRELFQHMLQKERVEPHQLAIDRPSQKLLKFLNKHYNLETTVPQVNNFVIFEGFFAHQHPPARKLPPKRAEGDIKPYSSSDRESGLPQGW.

The N-acetyltransferase domain occupies 1 to 190 (MEFPFDVDAL…NNFVIFEGFF (190 aa)). Lys-56 is modified (N6-acetyllysine; by autocatalysis). An acetyl-CoA-binding site is contributed by 124-137 (FYIHESLQRHGHGR). The residue at position 146 (Lys-146) is an N6-acetyllysine; by autocatalysis. Position 160 to 169 (160 to 169 (SQKLLKFLNK)) interacts with acetyl-CoA. The interval 195-225 (PPARKLPPKRAEGDIKPYSSSDRESGLPQGW) is disordered. The segment covering 203–219 (KRAEGDIKPYSSSDRES) has biased composition (basic and acidic residues). The residue at position 210 (Lys-210) is an N6-acetyllysine; by autocatalysis.

The protein belongs to the acetyltransferase ATAT1 family. In terms of assembly, component of the BBSome complex. Interacts with AP2 alpha-adaptins, including AP2A2, but not with AP1 gamma-adaptin (AP1G1/AP1G2); this interaction is required for efficient alpha-tubulin acetylation, hence clathrin-coated pits are sites of microtubule acetylation. Post-translationally, autoacetylation strongly increases tubulin acetylation.

The protein resides in the cytoplasm. It is found in the membrane. Its subcellular location is the clathrin-coated pit. It localises to the cell junction. The protein localises to the focal adhesion. The protein resides in the cell projection. It is found in the axon. Its subcellular location is the cytoskeleton. It localises to the spindle. It carries out the reaction L-lysyl-[alpha-tubulin] + acetyl-CoA = N(6)-acetyl-L-lysyl-[alpha-tubulin] + CoA + H(+). Functionally, specifically acetylates 'Lys-40' in alpha-tubulin on the lumenal side of microtubules. Promotes microtubule destabilization and accelerates microtubule dynamics; this activity may be independent of acetylation activity. Acetylates alpha-tubulin with a slow enzymatic rate, due to a catalytic site that is not optimized for acetyl transfer. Enters the microtubule through each end and diffuses quickly throughout the lumen of microtubules. Acetylates only long/old microtubules because of its slow acetylation rate since it does not have time to act on dynamically unstable microtubules before the enzyme is released. Required for normal sperm flagellar function. Promotes directional cell locomotion and chemotaxis, through AP2A2-dependent acetylation of alpha-tubulin at clathrin-coated pits that are concentrated at the leading edge of migrating cells. May facilitate primary cilium assembly. This is Alpha-tubulin N-acetyltransferase 1 from Bos taurus (Bovine).